Consider the following 427-residue polypeptide: MHDPSELLEDGPAAVRRLARRRYDLDLAALEKAVRRRSEAQAEVTRLRTELNRTSRARGRSGPPSEEEKEAARALRADVQQAEATARTAGHDLTELLLGIPNVPLDSVPDGDTDQEAVEVRRWGRPPHDAGTDARHHSDIGESLGILDGPAAAKLSGSRFSVGRGAGARLERALADFFLDLHTGEHGYTEYSVPFLVNRDTMTGTGQLPKFEDDLFRTQVGDRELFLIPTAEVPLTNLVAQQLLDARALPYAFTARTPCFRAEAGAYGRDTRGILRLHQFEKVELVRVCAPEDAPAQLELMVGHAEECLRRLELSYRVVQLPAGDLGFSARMTYDIEVWLPGSDAYREISSVSDCGTFQARRADIRHKRADGRKAPAATLNGSALPIGRTVAALLEQGVREDGSVLLPEALVPYTGFRRILPGGATA.

Residues 35-53 (RRRSEAQAEVTRLRTELNR) are compositionally biased toward basic and acidic residues. The interval 35–72 (RRRSEAQAEVTRLRTELNRTSRARGRSGPPSEEEKEAA) is disordered. Residue 230-232 (TAE) coordinates L-serine. 261–263 (RAE) lines the ATP pocket. Residue Glu284 coordinates L-serine. 348-351 (EISS) serves as a coordination point for ATP. Ser383 contributes to the L-serine binding site.

The protein belongs to the class-II aminoacyl-tRNA synthetase family. Type-1 seryl-tRNA synthetase subfamily. As to quaternary structure, homodimer. The tRNA molecule binds across the dimer.

Its subcellular location is the cytoplasm. It catalyses the reaction tRNA(Ser) + L-serine + ATP = L-seryl-tRNA(Ser) + AMP + diphosphate + H(+). The enzyme catalyses tRNA(Sec) + L-serine + ATP = L-seryl-tRNA(Sec) + AMP + diphosphate + H(+). It functions in the pathway aminoacyl-tRNA biosynthesis; selenocysteinyl-tRNA(Sec) biosynthesis; L-seryl-tRNA(Sec) from L-serine and tRNA(Sec): step 1/1. Catalyzes the attachment of serine to tRNA(Ser). Is also able to aminoacylate tRNA(Sec) with serine, to form the misacylated tRNA L-seryl-tRNA(Sec), which will be further converted into selenocysteinyl-tRNA(Sec). The protein is Serine--tRNA ligase 2 of Streptomyces avermitilis (strain ATCC 31267 / DSM 46492 / JCM 5070 / NBRC 14893 / NCIMB 12804 / NRRL 8165 / MA-4680).